Reading from the N-terminus, the 130-residue chain is Small ribosomal subunit protein uS8 (130 aa).

Belongs to the universal ribosomal protein uS8 family. In terms of assembly, part of the 30S ribosomal subunit. Contacts proteins S5 and S12.

In terms of biological role, one of the primary rRNA binding proteins, it binds directly to 16S rRNA central domain where it helps coordinate assembly of the platform of the 30S subunit. The chain is Small ribosomal subunit protein uS8 from Pseudomonas aeruginosa (strain UCBPP-PA14).